Reading from the N-terminus, the 805-residue chain is Leucine--tRNA ligase (805 aa).

Residues 40–51 (PYPSGQGLHVGH) carry the 'HIGH' region motif. The 'KMSKS' region signature appears at 576-580 (KMSKS). Residue Lys-579 coordinates ATP.

This sequence belongs to the class-I aminoacyl-tRNA synthetase family.

The protein localises to the cytoplasm. The catalysed reaction is tRNA(Leu) + L-leucine + ATP = L-leucyl-tRNA(Leu) + AMP + diphosphate. The protein is Leucine--tRNA ligase of Ligilactobacillus salivarius (strain UCC118) (Lactobacillus salivarius).